The primary structure comprises 299 residues: Small ribosomal subunit protein uS3 (299 aa).

The KH type-2 domain maps to 39–107; that stretch reads VREYLKAKLK…PVAVNIEEVR (69 aa). The segment at 214-299 is disordered; that stretch reads PVIKTDERED…AVAPGDAKGE (86 aa). Residues 217-248 are compositionally biased toward basic and acidic residues; it reads KTDEREDDRRNRRGPRSDRPAGDRRPPSRDGA. A compositionally biased stretch (low complexity) spans 257–282; that stretch reads ADAGAAAPTDKPADGAAPAAADGPKA.

This sequence belongs to the universal ribosomal protein uS3 family. As to quaternary structure, part of the 30S ribosomal subunit. Forms a tight complex with proteins S10 and S14.

Binds the lower part of the 30S subunit head. Binds mRNA in the 70S ribosome, positioning it for translation. This chain is Small ribosomal subunit protein uS3, found in Methylibium petroleiphilum (strain ATCC BAA-1232 / LMG 22953 / PM1).